We begin with the raw amino-acid sequence, 591 residues long: Asparagine synthetase [glutamine-hydrolyzing] 2 (591 aa).

Residue C2 is the For GATase activity of the active site. The region spanning 2–185 (CGILAVLGVA…PGHLYSSKTG (184 aa)) is the Glutamine amidotransferase type-2 domain. L-glutamine-binding positions include 50–54 (RLAIV), 75–77 (NGE), and D98. An Asparagine synthetase domain is found at 193–516 (PPWFSESIPS…PKNAARLTVP (324 aa)). ATP contacts are provided by residues L231, I267, and 341 to 342 (SG).

In terms of tissue distribution, expressed in companion cells of leaf sheath vascular bundles, and phloem-parenchyma cells, nucellar projections and nucellar epidermis of dorsal vascular bundles of grains.

It carries out the reaction L-aspartate + L-glutamine + ATP + H2O = L-asparagine + L-glutamate + AMP + diphosphate + H(+). Its pathway is amino-acid biosynthesis; L-asparagine biosynthesis; L-asparagine from L-aspartate (L-Gln route): step 1/1. Its function is as follows. Essential for nitrogen assimilation, distribution and remobilization within the plant via the phloem. The protein is Asparagine synthetase [glutamine-hydrolyzing] 2 of Oryza sativa subsp. japonica (Rice).